Reading from the N-terminus, the 800-residue chain is Elongation factor G, mitochondrial (800 aa).

The N-terminal 59 residues, methionine 1 to arginine 59, are a transit peptide targeting the mitochondrion. One can recognise a tr-type G domain in the interval alanine 99–asparagine 385. GTP is bound by residues alanine 108–threonine 115, aspartate 183–histidine 187, and asparagine 237–aspartate 240.

Belongs to the TRAFAC class translation factor GTPase superfamily. Classic translation factor GTPase family. EF-G/EF-2 subfamily.

It is found in the mitochondrion. Its pathway is protein biosynthesis; polypeptide chain elongation. In terms of biological role, mitochondrial GTPase that catalyzes the GTP-dependent ribosomal translocation step during translation elongation. During this step, the ribosome changes from the pre-translocational (PRE) to the post-translocational (POST) state as the newly formed A-site-bound peptidyl-tRNA and P-site-bound deacylated tRNA move to the P and E sites, respectively. Catalyzes the coordinated movement of the two tRNA molecules, the mRNA and conformational changes in the ribosome. The chain is Elongation factor G, mitochondrial (mef1) from Neurospora crassa (strain ATCC 24698 / 74-OR23-1A / CBS 708.71 / DSM 1257 / FGSC 987).